Here is a 160-residue protein sequence, read N- to C-terminus: Large ribosomal subunit protein uL15 (160 aa).

A compositionally biased stretch (basic and acidic residues) spans 1–13 (MKLNEIRDNEGAR). The interval 1–41 (MKLNEIRDNEGARKSRIRVGRGIGSGKGKTGGRGVKGQKSR) is disordered. A compositionally biased stretch (gly residues) spans 21–35 (RGIGSGKGKTGGRGV).

The protein belongs to the universal ribosomal protein uL15 family. Part of the 50S ribosomal subunit.

Binds to the 23S rRNA. This chain is Large ribosomal subunit protein uL15, found in Parvibaculum lavamentivorans (strain DS-1 / DSM 13023 / NCIMB 13966).